The following is a 268-amino-acid chain: Small ribosomal subunit protein eS1 (268 aa).

The interval 1 to 21 (MAVGKNKGLSKGGKKGGKKKV) is disordered.

The protein belongs to the eukaryotic ribosomal protein eS1 family. Component of the small ribosomal subunit. Mature ribosomes consist of a small (40S) and a large (60S) subunit. The 40S subunit contains about 33 different proteins and 1 molecule of RNA (18S). The 60S subunit contains about 49 different proteins and 3 molecules of RNA (28S, 5.8S and 5S).

Its subcellular location is the cytoplasm. Its function is as follows. Essential for oogenesis; required for late follicle cell development. The sequence is that of Small ribosomal subunit protein eS1 from Drosophila mojavensis (Fruit fly).